The primary structure comprises 591 residues: Coiled-coil domain-containing protein 148 (591 aa).

Coiled-coil stretches lie at residues 166–195, 352–417, and 466–498; these read VKKQ…SIKI, MLAK…KKKK, and ERRL…KQVA.

The chain is Coiled-coil domain-containing protein 148 (CCDC148) from Homo sapiens (Human).